The chain runs to 220 residues: MRAVDIHKSYSQGVGELEILRGVSLDIREGEAFAILGASGAGKSTLLQIMGTLDRPNKGELYCEGRDLLAMSDDELSRFRNSEMGFVFQFHHLLSEFNALENVMIPCRVGGESIKVAKEKALHLLEFMGLADRRDHHPNQLSGGELQRVAIARALVRHPKILFADEPTGNLDSHTSGKIQELFFRLKEEMKLALVIVTHDLTFATRFPKVYRMKDGQWQS.

An ABC transporter domain is found at 1–220 (MRAVDIHKSY…YRMKDGQWQS (220 aa)). Residue 37-44 (GASGAGKS) coordinates ATP.

The protein belongs to the ABC transporter superfamily. Lipoprotein translocase (TC 3.A.1.125) family. As to quaternary structure, the complex is composed of two ATP-binding proteins (LolD) and two transmembrane proteins (LolC and LolE).

It is found in the cell inner membrane. Its function is as follows. Part of the ABC transporter complex LolCDE involved in the translocation of mature outer membrane-directed lipoproteins, from the inner membrane to the periplasmic chaperone, LolA. Responsible for the formation of the LolA-lipoprotein complex in an ATP-dependent manner. The chain is Lipoprotein-releasing system ATP-binding protein LolD from Bdellovibrio bacteriovorus (strain ATCC 15356 / DSM 50701 / NCIMB 9529 / HD100).